We begin with the raw amino-acid sequence, 101 residues long: Cysteine-rich PDZ-binding protein (101 aa).

This sequence belongs to the CRIPT family. In terms of assembly, component of the minor spliceosome, which splices U12-type introns.

The protein localises to the cytoplasm. In terms of biological role, as a component of the minor spliceosome, involved in the splicing of U12-type introns in pre-mRNAs. This Gallus gallus (Chicken) protein is Cysteine-rich PDZ-binding protein (CRIPT).